The following is a 323-amino-acid chain: G patch domain-containing protein 4 (323 aa).

Disordered stretches follow at residues 1–32 (MSASSGEKSQGRRFAEQQMHKHGWTEGKGLGR), 84–110 (GVKVNRTKDDDAPVTNKKPRKALSNRN), 124–185 (PGGE…SAKL), and 197–323 (AKYG…NKSE). 2 stretches are compositionally biased toward basic and acidic residues: residues 9–32 (SQGRRFAEQQMHKHGWTEGKGLGR) and 84–94 (GVKVNRTKDDD). The G-patch domain maps to 11–57 (GRRFAEQQMHKHGWTEGKGLGRRENGISEAIKVKVKCDHAGVGHNSA). Over residues 131–141 (KEPSSSESSDS) the composition is skewed to low complexity. Residues 252 to 261 (EREEEEEEES) are compositionally biased toward acidic residues. Over residues 281–291 (SKKKKSKKKHR) the composition is skewed to basic residues. Residues 294 to 306 (SASPQEEQVTEST) are compositionally biased toward polar residues. The segment covering 311-323 (KPKKKKKKKNKSE) has biased composition (basic residues).

In Xenopus tropicalis (Western clawed frog), this protein is G patch domain-containing protein 4 (gpatch4).